Reading from the N-terminus, the 265-residue chain is 4-hydroxy-tetrahydrodipicolinate reductase (265 aa).

Residues 7–12, Asp33, 96–98, and 120–123 each bind NAD(+); these read GASGRM, GTT, and AANF. The active-site Proton donor/acceptor is the His153. (S)-2,3,4,5-tetrahydrodipicolinate is bound at residue His154. Lys157 functions as the Proton donor in the catalytic mechanism. 163-164 contacts (S)-2,3,4,5-tetrahydrodipicolinate; it reads GT.

It belongs to the DapB family.

It is found in the cytoplasm. The enzyme catalyses (S)-2,3,4,5-tetrahydrodipicolinate + NAD(+) + H2O = (2S,4S)-4-hydroxy-2,3,4,5-tetrahydrodipicolinate + NADH + H(+). The catalysed reaction is (S)-2,3,4,5-tetrahydrodipicolinate + NADP(+) + H2O = (2S,4S)-4-hydroxy-2,3,4,5-tetrahydrodipicolinate + NADPH + H(+). Its pathway is amino-acid biosynthesis; L-lysine biosynthesis via DAP pathway; (S)-tetrahydrodipicolinate from L-aspartate: step 4/4. Functionally, catalyzes the conversion of 4-hydroxy-tetrahydrodipicolinate (HTPA) to tetrahydrodipicolinate. This chain is 4-hydroxy-tetrahydrodipicolinate reductase, found in Cupriavidus necator (strain ATCC 17699 / DSM 428 / KCTC 22496 / NCIMB 10442 / H16 / Stanier 337) (Ralstonia eutropha).